Here is a 275-residue protein sequence, read N- to C-terminus: Erythroagglutinating phytohemagglutinin (275 aa).

Positions 1-21 are cleaved as a signal peptide; sequence MASSNLLSLALFLVLLTHANS. Asparagine 33 carries N-linked (GlcNAc...) (high mannose) asparagine glycosylation. Residues asparagine 81 and asparagine 101 are each glycosylated (N-linked (GlcNAc...) asparagine).

It belongs to the leguminous lectin family.

This insecticidal carbohydrate-binding lectin is toxic for the cowpea weevil. The polypeptide is Erythroagglutinating phytohemagglutinin (DLEC1) (Phaseolus vulgaris (Kidney bean)).